The chain runs to 508 residues: Mitochondrial distribution and morphology protein 10 (508 aa).

Residues 160–195 (PAHPTSTRPTPPQTPPSHTRQPSEPSTPAPSPTPGN) form a disordered region.

This sequence belongs to the MDM10 family. As to quaternary structure, component of the ER-mitochondria encounter structure (ERMES) or MDM complex, composed of MMM1, MDM10, MDM12 and MDM34. Associates with the mitochondrial outer membrane sorting assembly machinery SAM(core) complex.

The protein resides in the mitochondrion outer membrane. Component of the ERMES/MDM complex, which serves as a molecular tether to connect the endoplasmic reticulum and mitochondria. Components of this complex are involved in the control of mitochondrial shape and protein biogenesis and may function in phospholipid exchange. MDM10 is involved in the late assembly steps of the general translocase of the mitochondrial outer membrane (TOM complex). Functions in the TOM40-specific route of the assembly of outer membrane beta-barrel proteins, including the association of TOM40 with the receptor TOM22 and small TOM proteins. Can associate with the SAM(core) complex as well as the MDM12-MMM1 complex, both involved in late steps of the major beta-barrel assembly pathway, that is responsible for biogenesis of all outer membrane beta-barrel proteins. May act as a switch that shuttles between both complexes and channels precursor proteins into the TOM40-specific pathway. Plays a role in mitochondrial morphology and in the inheritance of mitochondria. This chain is Mitochondrial distribution and morphology protein 10, found in Cryptococcus neoformans var. neoformans serotype D (strain JEC21 / ATCC MYA-565) (Filobasidiella neoformans).